We begin with the raw amino-acid sequence, 364 residues long: Lipoyl synthase, mitochondrial (364 aa).

The segment at 34 to 53 is disordered; sequence PNFQDFIQNSDNSKDDFENY. The [4Fe-4S] cluster site is built by C99, C104, C110, C130, C134, C137, and S345. Residues 115–334 enclose the Radical SAM core domain; the sequence is EHGTQTATIM…EQRGNELGFL (220 aa).

It belongs to the radical SAM superfamily. Lipoyl synthase family. It depends on [4Fe-4S] cluster as a cofactor.

The protein localises to the mitochondrion. It carries out the reaction [[Fe-S] cluster scaffold protein carrying a second [4Fe-4S](2+) cluster] + N(6)-octanoyl-L-lysyl-[protein] + 2 oxidized [2Fe-2S]-[ferredoxin] + 2 S-adenosyl-L-methionine + 4 H(+) = [[Fe-S] cluster scaffold protein] + N(6)-[(R)-dihydrolipoyl]-L-lysyl-[protein] + 4 Fe(3+) + 2 hydrogen sulfide + 2 5'-deoxyadenosine + 2 L-methionine + 2 reduced [2Fe-2S]-[ferredoxin]. Its pathway is protein modification; protein lipoylation via endogenous pathway; protein N(6)-(lipoyl)lysine from octanoyl-[acyl-carrier-protein]: step 2/2. Functionally, catalyzes the radical-mediated insertion of two sulfur atoms into the C-6 and C-8 positions of the octanoyl moiety bound to the lipoyl domains of lipoate-dependent enzymes, thereby converting the octanoylated domains into lipoylated derivatives. The protein is Lipoyl synthase, mitochondrial of Drosophila grimshawi (Hawaiian fruit fly).